The following is a 404-amino-acid chain: CD209 antigen (404 aa).

Topologically, residues methionine 1 to cysteine 37 are cytoplasmic. Short sequence motifs (endocytosis signal) lie at residues leucine 14–leucine 15, glutamate 16–glutamate 18, and tyrosine 31–leucine 34. A helical; Signal-anchor for type II membrane protein transmembrane segment spans residues leucine 38–isoleucine 58. Residues glutamine 59–alanine 404 lie on the Extracellular side of the membrane. Asparagine 80 carries an N-linked (GlcNAc...) asparagine glycan. 7 consecutive repeat copies span residues lysine 96–serine 118, lysine 119–serine 141, lysine 142–serine 164, lysine 165–serine 187, glutamine 188–serine 210, lysine 211–serine 233, and lysine 234–proline 257. The 7 X approximate tandem repeats stretch occupies residues lysine 96–proline 257. 3 disulfide bridges follow: cysteine 256-cysteine 267, cysteine 284-cysteine 377, and cysteine 356-cysteine 369. The region spanning phenylalanine 263–lysine 378 is the C-type lectin domain. Residues glutamate 347, asparagine 349, valine 351, glutamate 354, asparagine 365, and aspartate 366 each coordinate Ca(2+).

In terms of assembly, homotetramer. Interacts with C1QBP; the interaction is indicative for a C1q:C1QBP:CD209 signaling complex. Interacts with ICAM2 and ICAM3 by binding to mannose-like carbohydrates. Interacts (via C-type lectin domain) with CEACAM1 (via Lewis X moieties); this interaction is regulated by the glycosylation pattern of CEACAM1 on cell types and regulates contact between dendritic cells and neutrophils.

It is found in the membrane. Its function is as follows. Pathogen-recognition receptor expressed on the surface of immature dendritic cells (DCs) and involved in initiation of primary immune response. Thought to mediate the endocytosis of pathogens which are subsequently degraded in lysosomal compartments. The receptor returns to the cell membrane surface and the pathogen-derived antigens are presented to resting T-cells via MHC class II proteins to initiate the adaptive immune response. Probably recognizes in a calcium-dependent manner high mannose N-linked oligosaccharides in a variety of pathogen antigens. In terms of biological role, on DCs it is a high affinity receptor for ICAM2 and ICAM3 by binding to mannose-like carbohydrates. May act as a DC rolling receptor that mediates transendothelial migration of DC presursors from blood to tissues by binding endothelial ICAM2. Seems to regulate DC-induced T-cell proliferation by binding to ICAM3 on T-cells in the immunological synapse formed between DC and T-cells. This Nomascus concolor (Black crested gibbon) protein is CD209 antigen (CD209).